The primary structure comprises 173 residues: Shikimate kinase 1 (173 aa).

Residue Gly-14–Thr-19 coordinates ATP. Ser-18 lines the Mg(2+) pocket. Residues Asp-36, Arg-60, and Gly-82 each contribute to the substrate site. Arg-120 contacts ATP. Substrate is bound at residue Arg-140. Gln-157 is an ATP binding site.

This sequence belongs to the shikimate kinase family. In terms of assembly, monomer. It depends on Mg(2+) as a cofactor.

Its subcellular location is the cytoplasm. It catalyses the reaction shikimate + ATP = 3-phosphoshikimate + ADP + H(+). It functions in the pathway metabolic intermediate biosynthesis; chorismate biosynthesis; chorismate from D-erythrose 4-phosphate and phosphoenolpyruvate: step 5/7. Its function is as follows. Catalyzes the specific phosphorylation of the 3-hydroxyl group of shikimic acid using ATP as a cosubstrate. This Shigella boydii serotype 18 (strain CDC 3083-94 / BS512) protein is Shikimate kinase 1.